Here is a 126-residue protein sequence, read N- to C-terminus: UPF0538 protein C2orf76 homolog (126 aa).

Belongs to the UPF0538 family.

The sequence is that of UPF0538 protein C2orf76 homolog from Mus musculus (Mouse).